A 409-amino-acid chain; its full sequence is Endoglucanase B (409 aa).

Residues H61, 65–66 (WY), Y92, and H127 each bind substrate. E165 acts as the Proton donor in catalysis. Residue Y228 participates in substrate binding. E254 serves as the catalytic Nucleophile. Substrate-binding positions include 260–261 (AT), W288, and 293–295 (KDE). The interval 326–372 (IRESATTPPSDPTPPSDPDPGEPEPDPGEPDPTPPSDPGDYPAWDPN) is disordered. The span at 334–343 (PSDPTPPSDP) shows a compositional bias: pro residues. Residues 344-354 (DPGEPEPDPGE) are compositionally biased toward acidic residues.

This sequence belongs to the glycosyl hydrolase 5 (cellulase A) family.

The catalysed reaction is Endohydrolysis of (1-&gt;4)-beta-D-glucosidic linkages in cellulose, lichenin and cereal beta-D-glucans.. This chain is Endoglucanase B (celB), found in Evansella cellulosilytica (strain ATCC 21833 / DSM 2522 / FERM P-1141 / JCM 9156 / N-4) (Bacillus cellulosilyticus).